Reading from the N-terminus, the 512-residue chain is Mannose-1-phosphate guanylyltransferase (512 aa).

It belongs to the mannose-6-phosphate isomerase type 2 family.

The enzyme catalyses alpha-D-mannose 1-phosphate + GTP + H(+) = GDP-alpha-D-mannose + diphosphate. This is Mannose-1-phosphate guanylyltransferase (noeJ) from Sinorhizobium fredii (strain NBRC 101917 / NGR234).